Here is a 562-residue protein sequence, read N- to C-terminus: NAD-dependent malic enzyme (562 aa).

Catalysis depends on tyrosine 101, which acts as the Proton donor. Arginine 154 provides a ligand contact to NAD(+). Lysine 172 (proton acceptor) is an active-site residue. 3 residues coordinate a divalent metal cation: glutamate 243, aspartate 244, and aspartate 267. 2 residues coordinate NAD(+): aspartate 267 and asparagine 415.

It belongs to the malic enzymes family. In terms of assembly, homotetramer. The cofactor is Mg(2+). Mn(2+) is required as a cofactor.

The enzyme catalyses (S)-malate + NAD(+) = pyruvate + CO2 + NADH. It catalyses the reaction oxaloacetate + H(+) = pyruvate + CO2. The chain is NAD-dependent malic enzyme from Shewanella woodyi (strain ATCC 51908 / MS32).